Here is a 453-residue protein sequence, read N- to C-terminus: Bifunctional protein GlmU (453 aa).

A pyrophosphorylase region spans residues 1 to 227 (MTQDIVILAA…EAEVAGVNDR (227 aa)). UDP-N-acetyl-alpha-D-glucosamine contacts are provided by residues 8–11 (LAAG), Lys22, Gln73, 78–79 (GT), 100–102 (YGD), Gly137, Glu152, Asn167, and Asn225. Asp102 serves as a coordination point for Mg(2+). Residue Asn225 participates in Mg(2+) binding. The interval 228–248 (VQLAALERELQNQQAVSLMQN) is linker. The segment at 249–453 (GATLLDPSRI…KDNWPRPIKK (205 aa)) is N-acetyltransferase. Arg331 and Lys349 together coordinate UDP-N-acetyl-alpha-D-glucosamine. The Proton acceptor role is filled by His361. UDP-N-acetyl-alpha-D-glucosamine contacts are provided by Tyr364 and Asn375. Residues Ala378, 384-385 (NY), Ser403, Ala421, and Arg438 each bind acetyl-CoA.

This sequence in the N-terminal section; belongs to the N-acetylglucosamine-1-phosphate uridyltransferase family. In the C-terminal section; belongs to the transferase hexapeptide repeat family. In terms of assembly, homotrimer. It depends on Mg(2+) as a cofactor.

The protein localises to the cytoplasm. The enzyme catalyses alpha-D-glucosamine 1-phosphate + acetyl-CoA = N-acetyl-alpha-D-glucosamine 1-phosphate + CoA + H(+). The catalysed reaction is N-acetyl-alpha-D-glucosamine 1-phosphate + UTP + H(+) = UDP-N-acetyl-alpha-D-glucosamine + diphosphate. Its pathway is nucleotide-sugar biosynthesis; UDP-N-acetyl-alpha-D-glucosamine biosynthesis; N-acetyl-alpha-D-glucosamine 1-phosphate from alpha-D-glucosamine 6-phosphate (route II): step 2/2. It participates in nucleotide-sugar biosynthesis; UDP-N-acetyl-alpha-D-glucosamine biosynthesis; UDP-N-acetyl-alpha-D-glucosamine from N-acetyl-alpha-D-glucosamine 1-phosphate: step 1/1. The protein operates within bacterial outer membrane biogenesis; LPS lipid A biosynthesis. Catalyzes the last two sequential reactions in the de novo biosynthetic pathway for UDP-N-acetylglucosamine (UDP-GlcNAc). The C-terminal domain catalyzes the transfer of acetyl group from acetyl coenzyme A to glucosamine-1-phosphate (GlcN-1-P) to produce N-acetylglucosamine-1-phosphate (GlcNAc-1-P), which is converted into UDP-GlcNAc by the transfer of uridine 5-monophosphate (from uridine 5-triphosphate), a reaction catalyzed by the N-terminal domain. This chain is Bifunctional protein GlmU, found in Marinomonas sp. (strain MWYL1).